The primary structure comprises 242 residues: Glucosamine-6-phosphate deaminase (242 aa).

The active-site Proton acceptor; for enolization step is Asp-67. The For ring-opening step role is filled by Asn-136. The active-site Proton acceptor; for ring-opening step is the His-138. Glu-143 functions as the For ring-opening step in the catalytic mechanism.

Belongs to the glucosamine/galactosamine-6-phosphate isomerase family. NagB subfamily.

It carries out the reaction alpha-D-glucosamine 6-phosphate + H2O = beta-D-fructose 6-phosphate + NH4(+). It functions in the pathway amino-sugar metabolism; N-acetylneuraminate degradation; D-fructose 6-phosphate from N-acetylneuraminate: step 5/5. Catalyzes the reversible isomerization-deamination of glucosamine 6-phosphate (GlcN6P) to form fructose 6-phosphate (Fru6P) and ammonium ion. This is Glucosamine-6-phosphate deaminase from Alkaliphilus metalliredigens (strain QYMF).